A 368-amino-acid polypeptide reads, in one-letter code: MHSFQLLGLAALGSLVAAAPSPSRVSDLTERSSSCTFTDAAKASSSASSCSSIVLKDIAVPAGKTLDLSHVKDGTTITFEGTTTFGYKEWKGPLIRLAGKDITVTMAKGAVIDGEGSRWWDGKGTNGGKTKPKFLYAHKLEDSTIKGLNIKNTPVQAISVQANNLHLTDITIDNSDGDSKGGHNTDGFDISESNGVYISGANVKNQDDCIAINSGKNIEFTGGTCSGGHGLSIGSIGGRDDNTVQGVKITDSTVTNSDNGIRIKTIVDETGSVSDVTYSNIKLSGIHKKGIVIQQDYKNGGPTGKPSNGIPIKDVTVDGITGSVDSKATPVYILCGSGSCSDWTWKNVKLSGGKSSSECKNLPSGVSC.

An N-terminal signal peptide occupies residues 1 to 18 (MHSFQLLGLAALGSLVAA). Positions 19–31 (APSPSRVSDLTER) are excised as a propeptide. Cys35 and Cys50 are disulfide-bonded. PbH1 repeat units lie at residues 162 to 192 (ANNL…DISE), 193 to 214 (SNGV…AINS), 215 to 235 (GKNI…SIGS), 244 to 265 (VQGV…RIKT), 273 to 295 (VSDV…VIQQ), and 307 to 328 (SNGI…DSKA). Asp207 (proton donor) is an active-site residue. Cysteines 209 and 225 form a disulfide. His229 is an active-site residue. Cystine bridges form between Cys335–Cys340 and Cys359–Cys368.

It belongs to the glycosyl hydrolase 28 family.

Its subcellular location is the secreted. It carries out the reaction (1,4-alpha-D-galacturonosyl)n+m + H2O = (1,4-alpha-D-galacturonosyl)n + (1,4-alpha-D-galacturonosyl)m.. Involved in maceration and soft-rotting of plant tissue. Hydrolyzes the 1,4-alpha glycosidic bonds of de-esterified pectate in the smooth region of the plant cell wall. In Aspergillus terreus (strain NIH 2624 / FGSC A1156), this protein is Probable endopolygalacturonase I (pgaI).